A 251-amino-acid chain; its full sequence is MNLNSIPAFQDNYIWVLTNDEGRCVIVDPGEAAPVLKAIAEHKWMPEAIFLTHHHHDHVGGVKELLQHFPQMTVYGPAETQDKGATHLVGDGDTIRVLGEKFTLFATPGHTLGHVCYFSHPYLFCGDTLFSGGCGRLFEGTPSQMYQSLMKINSLPDDTLICSAHEYTLANIKFALSILPHDSFINEYYRKVKELRVKKQMTLPVILKNERKINLFLRTEDIDLINEINKETILQQPEARFAWLRSKKDTF.

Residues H53, H55, D57, H58, H110, D127, and H165 each coordinate Zn(2+).

This sequence belongs to the metallo-beta-lactamase superfamily. Glyoxalase II family. Monomer. Zn(2+) is required as a cofactor.

It carries out the reaction an S-(2-hydroxyacyl)glutathione + H2O = a 2-hydroxy carboxylate + glutathione + H(+). It participates in secondary metabolite metabolism; methylglyoxal degradation; (R)-lactate from methylglyoxal: step 2/2. Functionally, thiolesterase that catalyzes the hydrolysis of S-D-lactoyl-glutathione to form glutathione and D-lactic acid. This chain is Hydroxyacylglutathione hydrolase, found in Salmonella dublin (strain CT_02021853).